The primary structure comprises 26 residues: Mitochondrial import receptor subunit TOM7-2 (26 aa).

Belongs to the Tom7 family. In terms of assembly, forms part of the preprotein translocase complex of the outer mitochondrial membrane (TOM complex).

It is found in the mitochondrion outer membrane. Functionally, seems to act as a modulator of the dynamics of the mitochondrial protein transport machinery. Seems to promote the dissociation of subunits of the outer membrane translocase. This chain is Mitochondrial import receptor subunit TOM7-2 (TOM7-2), found in Solanum tuberosum (Potato).